The chain runs to 119 residues: Ribonuclease P protein component (119 aa).

This sequence belongs to the RnpA family. As to quaternary structure, consists of a catalytic RNA component (M1 or rnpB) and a protein subunit.

It carries out the reaction Endonucleolytic cleavage of RNA, removing 5'-extranucleotides from tRNA precursor.. Its function is as follows. RNaseP catalyzes the removal of the 5'-leader sequence from pre-tRNA to produce the mature 5'-terminus. It can also cleave other RNA substrates such as 4.5S RNA. The protein component plays an auxiliary but essential role in vivo by binding to the 5'-leader sequence and broadening the substrate specificity of the ribozyme. This Streptococcus mutans serotype c (strain ATCC 700610 / UA159) protein is Ribonuclease P protein component.